We begin with the raw amino-acid sequence, 489 residues long: tRNA(Ile)-lysidine synthase (489 aa).

Residue 35-40 (SGGLDS) participates in ATP binding.

This sequence belongs to the tRNA(Ile)-lysidine synthase family.

The protein localises to the cytoplasm. It catalyses the reaction cytidine(34) in tRNA(Ile2) + L-lysine + ATP = lysidine(34) in tRNA(Ile2) + AMP + diphosphate + H(+). Its function is as follows. Ligates lysine onto the cytidine present at position 34 of the AUA codon-specific tRNA(Ile) that contains the anticodon CAU, in an ATP-dependent manner. Cytidine is converted to lysidine, thus changing the amino acid specificity of the tRNA from methionine to isoleucine. The protein is tRNA(Ile)-lysidine synthase of Burkholderia mallei (strain ATCC 23344).